Here is a 1068-residue protein sequence, read N- to C-terminus: Retinoblastoma-like protein 1 (1068 aa).

The residue at position 332 (Thr-332) is a Phosphothreonine; by CDK2. Thr-369 is modified (phosphothreonine; by CDK4). A Phosphothreonine; by CDK2 modification is found at Thr-385. Positions 385–584 (TPVASATQSV…WEALQVSANK (200 aa)) are domain A. Residues 385–949 (TPVASATQSV…GRVKSFALKY (565 aa)) form a pocket; binds T and E1A region. The tract at residues 585–780 (VPTCEEVIFP…AQEVHSTGIN (196 aa)) is spacer. Ser-640 bears the Phosphoserine; by CDK2 and CDK4 mark. Residues Ser-650 and Ser-749 each carry the phosphoserine modification. Phosphoserine; by CDK2 is present on Ser-762. The segment at 781 to 949 (RPKRTGSLAL…GRVKSFALKY (169 aa)) is domain B. Residues Ser-964 and Ser-975 each carry the phosphoserine; by CDK2 and CDK4 modification. Ser-988 carries the post-translational modification Phosphoserine; by CDK2. Phosphothreonine; by CDK2 is present on Thr-997. Ser-1009 bears the Phosphoserine; by CDK2 mark. Ser-1041 carries the phosphoserine modification.

This sequence belongs to the retinoblastoma protein (RB) family. In terms of assembly, component of the DREAM complex (also named LINC complex) at least composed of E2F4, E2F5, LIN9, LIN37, LIN52, LIN54, MYBL1, MYBL2, RBL1, RBL2, RBBP4, TFDP1 and TFDP2. The complex exists in quiescent cells where it represses cell cycle-dependent genes. It dissociates in S phase when LIN9, LIN37, LIN52 and LIN54 form a subcomplex that binds to MYBL2. Interacts with AATF. Interacts with KDM5A. Interacts with KMT5B and KMT5C. Interacts with USP4. Interacts with RBBP9. As to quaternary structure, (Microbial infection) Interacts with SV40 and JC virus large T antigens. Large T antigen, but not E1A, binds only to the unphosphorylated form. (Microbial infection) Interacts with JC virus small t antigen. Post-translationally, cell-cycle arrest properties are inactivated by phosphorylation on Thr-332, Ser-640, Ser-964 and Ser-975 by CDK4.

The protein resides in the nucleus. Key regulator of entry into cell division. Directly involved in heterochromatin formation by maintaining overall chromatin structure and, in particular, that of constitutive heterochromatin by stabilizing histone methylation. Recruits and targets histone methyltransferases KMT5B and KMT5C, leading to epigenetic transcriptional repression. Controls histone H4 'Lys-20' trimethylation. Probably acts as a transcription repressor by recruiting chromatin-modifying enzymes to promoters. Potent inhibitor of E2F-mediated trans-activation. May act as a tumor suppressor. This chain is Retinoblastoma-like protein 1 (RBL1), found in Homo sapiens (Human).